Reading from the N-terminus, the 272-residue chain is UPF0759 protein YecE (272 aa).

The protein belongs to the UPF0759 family.

This chain is UPF0759 protein YecE (yecE), found in Escherichia coli O157:H7.